We begin with the raw amino-acid sequence, 303 residues long: Energy-coupling factor transporter ATP-binding protein EcfA2 (303 aa).

Positions 17–260 (LSVSNLSCFF…EAFLAHTTII (244 aa)) constitute an ABC transporter domain. 54–61 (GDSGSGKS) serves as a coordination point for ATP.

This sequence belongs to the ABC transporter superfamily. Energy-coupling factor EcfA family. Forms a stable energy-coupling factor (ECF) transporter complex composed of 2 membrane-embedded substrate-binding proteins (S component), 2 ATP-binding proteins (A component) and 2 transmembrane proteins (T component).

The protein resides in the cell membrane. In terms of biological role, ATP-binding (A) component of a common energy-coupling factor (ECF) ABC-transporter complex. Unlike classic ABC transporters this ECF transporter provides the energy necessary to transport a number of different substrates. In Mycoplasma pneumoniae (strain ATCC 29342 / M129 / Subtype 1) (Mycoplasmoides pneumoniae), this protein is Energy-coupling factor transporter ATP-binding protein EcfA2.